We begin with the raw amino-acid sequence, 116 residues long: Large ribosomal subunit protein uL18 (116 aa).

It belongs to the universal ribosomal protein uL18 family. In terms of assembly, part of the 50S ribosomal subunit; part of the 5S rRNA/L5/L18/L25 subcomplex. Contacts the 5S and 23S rRNAs.

Functionally, this is one of the proteins that bind and probably mediate the attachment of the 5S RNA into the large ribosomal subunit, where it forms part of the central protuberance. In Shewanella sp. (strain ANA-3), this protein is Large ribosomal subunit protein uL18.